Consider the following 224-residue polypeptide: UPF0441 protein PC1_0312 (224 aa).

Positions Pro178–Gly224 are disordered. A compositionally biased stretch (low complexity) spans Arg209–Gly224.

Belongs to the UPF0441 family.

The polypeptide is UPF0441 protein PC1_0312 (Pectobacterium carotovorum subsp. carotovorum (strain PC1)).